The chain runs to 109 residues: Preprofallaxidin-8 (109 aa).

Positions 1-22 (MASLKKSLFLVLFLGLLSLSIC) are cleaved as a signal peptide. A propeptide spanning residues 23-46 (EEQKRENEEDAEDENHEEESEEKR) is cleaved from the precursor. The disordered stretch occupies residues 27–46 (RENEEDAEDENHEEESEEKR). Positions 30-42 (EEDAEDENHEEES) are enriched in acidic residues. A Leucine amide modification is found at Leu-62. Residues 66–70 (SEEKR) constitute a propeptide that is removed on maturation. Residue Met-75 is modified to Methionine amide. Residues 79-83 (SEEKR) constitute a propeptide that is removed on maturation. At Met-88 the chain carries Methionine amide. 2 consecutive propeptides follow at residues 92 to 96 (SEEKR) and Ala-108.

The protein belongs to the frog skin active peptide (FSAP) family. Brevinin subfamily. In terms of tissue distribution, expressed by the skin glands.

Its subcellular location is the secreted. In terms of biological role, fallaxidin-2.1 shows no antibacterial activity against Gram-positive or Gram-negative bacteria. Does not inhibit the formation of NO by neuronal nitric oxide synthase. Has no effect on splenocyte proliferation or smooth muscle contraction. Fallaxidin-3.2 shows antibacterial activity against the Gram-positive bacteria E.faecalis (MIC=100 uM) and L.lactis (MIC=500 uM). No antibacterial activity against the Gram-positive bacteria B.cereus, L.innocua, M.luteus, S.epidermidis, S.uberis and S.aureus, or the Gram-negative bacteria E.cloacae and E.coli. The polypeptide is Preprofallaxidin-8 (Litoria fallax (Eastern dwarf tree frog)).